Consider the following 91-residue polypeptide: MVATNRCCVFALLFALLLVHSLTEAGKGKEILGKIKEKIIEAKDKMKAGWERLTSQSEYACPAIDKFCEDHCAAKKAVGKCDDFKCNCIKL.

The N-terminal stretch at 1 to 25 (MVATNRCCVFALLFALLLVHSLTEA) is a signal peptide. In terms of domain architecture, BetaSPN-type CS-alpha/beta spans 58–91 (EYACPAIDKFCEDHCAAKKAVGKCDDFKCNCIKL). Disulfide bonds link cysteine 61-cysteine 81, cysteine 68-cysteine 86, and cysteine 72-cysteine 88.

This sequence belongs to the long chain scorpion toxin family. Class 2 subfamily. As to expression, expressed by the venom gland.

The protein resides in the secreted. In terms of biological role, may function as a voltage-gated potassium channel blocker and may have cytolytic activity. Is often not detected in the tested venom fractions, suggesting that the toxin is likely subject to frequent processing within the venom. Specific and reversible blocker of the potassium channel Kv1.2/KCNA2 (IC(50)=544 nM). Functionally, shows cytolytic effects on erythrocytes and induces non-selective pore formation when high concentrations (300 nM) are applied on oocytes. Its function is as follows. Does not cause hemolysis, mast cell degranulation, LDH release, and does not have antimicrobial activity. Does not cause edema and pain. In Tityus serrulatus (Brazilian scorpion), this protein is Tityustoxin-19.